The primary structure comprises 339 residues: Ferredoxin--NADP reductase (339 aa).

FAD is bound by residues Asp36, Gln44, Tyr49, Val89, Phe123, Asp290, and Thr331.

This sequence belongs to the ferredoxin--NADP reductase type 2 family. As to quaternary structure, homodimer. The cofactor is FAD.

The enzyme catalyses 2 reduced [2Fe-2S]-[ferredoxin] + NADP(+) + H(+) = 2 oxidized [2Fe-2S]-[ferredoxin] + NADPH. This Acidiphilium cryptum (strain JF-5) protein is Ferredoxin--NADP reductase.